Reading from the N-terminus, the 161-residue chain is Large ribosomal subunit protein uL10 (161 aa).

The protein belongs to the universal ribosomal protein uL10 family. In terms of assembly, part of the ribosomal stalk of the 50S ribosomal subunit. The N-terminus interacts with L11 and the large rRNA to form the base of the stalk. The C-terminus forms an elongated spine to which L12 dimers bind in a sequential fashion forming a multimeric L10(L12)X complex.

Its function is as follows. Forms part of the ribosomal stalk, playing a central role in the interaction of the ribosome with GTP-bound translation factors. The polypeptide is Large ribosomal subunit protein uL10 (rplJ) (Mycoplasma pneumoniae (strain ATCC 29342 / M129 / Subtype 1) (Mycoplasmoides pneumoniae)).